The chain runs to 517 residues: Perilipin-1 (517 aa).

The residue at position 81 (Ser-81) is a Phosphoserine. Thr-85 carries the phosphothreonine modification. A phosphoserine mark is found at Ser-126, Ser-130, Ser-132, Ser-137, and Ser-174. A disordered region spans residues 197 to 217 (VESAPSSGRQKTQKAPKAKPS). Phosphothreonine occurs at positions 224, 299, and 301. A disordered region spans residues 285–321 (HNLAASKDENHEDQTDTEGEETDEEEEEEESEAEENV). The interval 291-322 (KDENHEDQTDTEGEETDEEEEEEESEAEENVL) is required for interaction with CIDEC. Over residues 299–319 (TDTEGEETDEEEEEEESEAEE) the composition is skewed to acidic residues. A phosphoserine mark is found at Ser-315, Ser-385, Ser-387, Pro-408, Ser-411, Ser-434, Ser-436, Ser-440, Ser-460, Ser-492, and Ser-494. The disordered stretch occupies residues 415-495 (PESEFQDIDN…KPARRVSDSF (81 aa)). Positions 483-492 (PREKPARRVS) are enriched in basic and acidic residues.

Belongs to the perilipin family. In terms of assembly, interacts with ABHD5. Interacts with CIDEC. Interacts with AQP7. In terms of processing, major cAMP-dependent protein kinase substrate in adipocytes, also dephosphorylated by PP1. When phosphorylated, may be maximally sensitive to HSL. When unphosphorylated, may play a role in the inhibition of lipolysis, by acting as a barrier in lipid droplet. The N-terminus is blocked. As to expression, adipocytes.

It is found in the endoplasmic reticulum. The protein resides in the lipid droplet. In terms of biological role, modulator of adipocyte lipid metabolism. Coats lipid storage droplets to protect them from breakdown by hormone-sensitive lipase (HSL). Its absence may result in leanness. Plays a role in unilocular lipid droplet formation by activating CIDEC. Their interaction promotes lipid droplet enlargement and directional net neutral lipid transfer. May modulate lipolysis and triglyceride levels. This chain is Perilipin-1 (Plin1), found in Rattus norvegicus (Rat).